A 208-amino-acid polypeptide reads, in one-letter code: Large ribosomal subunit protein uL3 (208 aa).

A disordered region spans residues 116–148 (GFQGVIKRHGQSRGPMAHGSRYHRRPGSMGPVA).

It belongs to the universal ribosomal protein uL3 family. As to quaternary structure, part of the 50S ribosomal subunit. Forms a cluster with proteins L14 and L19.

In terms of biological role, one of the primary rRNA binding proteins, it binds directly near the 3'-end of the 23S rRNA, where it nucleates assembly of the 50S subunit. This chain is Large ribosomal subunit protein uL3, found in Streptococcus pyogenes serotype M12 (strain MGAS2096).